Here is a 286-residue protein sequence, read N- to C-terminus: Acetylglutamate kinase (286 aa).

Substrate contacts are provided by residues 63 to 64 (GG), Arg85, and Asn178.

The protein belongs to the acetylglutamate kinase family. ArgB subfamily.

It is found in the cytoplasm. It carries out the reaction N-acetyl-L-glutamate + ATP = N-acetyl-L-glutamyl 5-phosphate + ADP. It participates in amino-acid biosynthesis; L-arginine biosynthesis; N(2)-acetyl-L-ornithine from L-glutamate: step 2/4. In terms of biological role, catalyzes the ATP-dependent phosphorylation of N-acetyl-L-glutamate. In Clostridioides difficile (strain 630) (Peptoclostridium difficile), this protein is Acetylglutamate kinase.